We begin with the raw amino-acid sequence, 334 residues long: Probable type II restriction enzyme HindVP (334 aa).

It catalyses the reaction Endonucleolytic cleavage of DNA to give specific double-stranded fragments with terminal 5'-phosphates.. In terms of biological role, a P subtype restriction enzyme that recognizes the double-stranded sequence 5'-GRCGYC-3'; the cleavage site is unknown. This Haemophilus influenzae (strain ATCC 51907 / DSM 11121 / KW20 / Rd) protein is Probable type II restriction enzyme HindVP (hindVRP).